Here is a 332-residue protein sequence, read N- to C-terminus: MSQNDPKIDVKALGKVAVLMGGTSAEREVSLMSGGGVLQALRSRGVDAHAFDPAHSDLSELKAHGYSRCFIALHGRHGEDGTVQGALELLGIPYTGPGVMASSIAMDKIMTKRIWRADGLPTPDWRLVSSSAETAQAFQELGAPMIVKPSREGSTIGLTKVTSLGQCEQAYRLAAQHDPEVLCEQFIDGDETTCPILGQGAEARALPVIRIEAPQGNYDYQNKYFTDVTQYHCPSGLPEAEEREIQRIVVQAYRTLGCRGWARADIMIRASDRKPFLLEINTSPGMTGHSLVPMSANASGISYPDLCLRILASASLDALQGRAGAAGGREPV.

One can recognise an ATP-grasp domain in the interval 112-312 (KRIWRADGLP…YPDLCLRILA (201 aa)). 138–193 (FQELGAPMIVKPSREGSTIGLTKVTSLGQCEQAYRLAAQHDPEVLCEQFIDGDETT) serves as a coordination point for ATP. Mg(2+) is bound by residues D265, E279, and N281.

This sequence belongs to the D-alanine--D-alanine ligase family. Requires Mg(2+) as cofactor. It depends on Mn(2+) as a cofactor.

It is found in the cytoplasm. The enzyme catalyses 2 D-alanine + ATP = D-alanyl-D-alanine + ADP + phosphate + H(+). It participates in cell wall biogenesis; peptidoglycan biosynthesis. Cell wall formation. The polypeptide is D-alanine--D-alanine ligase (Acidovorax ebreus (strain TPSY) (Diaphorobacter sp. (strain TPSY))).